We begin with the raw amino-acid sequence, 496 residues long: Glutamyl-tRNA(Gln) amidotransferase subunit A (496 aa).

Catalysis depends on charge relay system residues Lys79 and Ser159. Ser183 (acyl-ester intermediate) is an active-site residue.

Belongs to the amidase family. GatA subfamily. As to quaternary structure, heterotrimer of A, B and C subunits.

The enzyme catalyses L-glutamyl-tRNA(Gln) + L-glutamine + ATP + H2O = L-glutaminyl-tRNA(Gln) + L-glutamate + ADP + phosphate + H(+). In terms of biological role, allows the formation of correctly charged Gln-tRNA(Gln) through the transamidation of misacylated Glu-tRNA(Gln) in organisms which lack glutaminyl-tRNA synthetase. The reaction takes place in the presence of glutamine and ATP through an activated gamma-phospho-Glu-tRNA(Gln). In Bartonella quintana (strain Toulouse) (Rochalimaea quintana), this protein is Glutamyl-tRNA(Gln) amidotransferase subunit A.